The following is a 464-amino-acid chain: 3-isopropylmalate dehydratase large subunit (464 aa).

The [4Fe-4S] cluster site is built by cysteine 345, cysteine 405, and cysteine 408.

It belongs to the aconitase/IPM isomerase family. LeuC type 1 subfamily. As to quaternary structure, heterodimer of LeuC and LeuD. [4Fe-4S] cluster is required as a cofactor.

The catalysed reaction is (2R,3S)-3-isopropylmalate = (2S)-2-isopropylmalate. It functions in the pathway amino-acid biosynthesis; L-leucine biosynthesis; L-leucine from 3-methyl-2-oxobutanoate: step 2/4. Catalyzes the isomerization between 2-isopropylmalate and 3-isopropylmalate, via the formation of 2-isopropylmaleate. The chain is 3-isopropylmalate dehydratase large subunit from Flavobacterium johnsoniae (strain ATCC 17061 / DSM 2064 / JCM 8514 / BCRC 14874 / CCUG 350202 / NBRC 14942 / NCIMB 11054 / UW101) (Cytophaga johnsonae).